The following is a 427-amino-acid chain: Serine hydroxymethyltransferase (427 aa).

Residues Leu-122 and 126 to 128 (GHL) contribute to the (6S)-5,6,7,8-tetrahydrofolate site. Lys-231 bears the N6-(pyridoxal phosphate)lysine mark. 355 to 357 (SPF) serves as a coordination point for (6S)-5,6,7,8-tetrahydrofolate.

Belongs to the SHMT family. As to quaternary structure, homodimer. It depends on pyridoxal 5'-phosphate as a cofactor.

Its subcellular location is the cytoplasm. It catalyses the reaction (6R)-5,10-methylene-5,6,7,8-tetrahydrofolate + glycine + H2O = (6S)-5,6,7,8-tetrahydrofolate + L-serine. Its pathway is one-carbon metabolism; tetrahydrofolate interconversion. The protein operates within amino-acid biosynthesis; glycine biosynthesis; glycine from L-serine: step 1/1. Its function is as follows. Catalyzes the reversible interconversion of serine and glycine with tetrahydrofolate (THF) serving as the one-carbon carrier. This reaction serves as the major source of one-carbon groups required for the biosynthesis of purines, thymidylate, methionine, and other important biomolecules. Also exhibits THF-independent aldolase activity toward beta-hydroxyamino acids, producing glycine and aldehydes, via a retro-aldol mechanism. This chain is Serine hydroxymethyltransferase, found in Nostoc sp. (strain PCC 7120 / SAG 25.82 / UTEX 2576).